The sequence spans 319 residues: ATP-dependent 6-phosphofructokinase (319 aa).

ATP contacts are provided by residues Gly-11, 72–73 (RS), and 102–105 (GDGS). Asp-103 is a Mg(2+) binding site. Residue 126–128 (TID) coordinates substrate. The Proton acceptor role is filled by Asp-128. Arg-155 is an ADP binding site. Substrate is bound by residues Arg-163 and 170 to 172 (MGR). 186–188 (GAE) provides a ligand contact to ADP. Residues Glu-223, Arg-245, and 251–254 (HTQR) contribute to the substrate site.

The protein belongs to the phosphofructokinase type A (PFKA) family. ATP-dependent PFK group I subfamily. Prokaryotic clade 'B1' sub-subfamily. Homotetramer. It depends on Mg(2+) as a cofactor.

It localises to the cytoplasm. The catalysed reaction is beta-D-fructose 6-phosphate + ATP = beta-D-fructose 1,6-bisphosphate + ADP + H(+). The protein operates within carbohydrate degradation; glycolysis; D-glyceraldehyde 3-phosphate and glycerone phosphate from D-glucose: step 3/4. With respect to regulation, allosterically activated by ADP and other diphosphonucleosides, and allosterically inhibited by phosphoenolpyruvate. Functionally, catalyzes the phosphorylation of D-fructose 6-phosphate to fructose 1,6-bisphosphate by ATP, the first committing step of glycolysis. The chain is ATP-dependent 6-phosphofructokinase from Sulfurimonas denitrificans (strain ATCC 33889 / DSM 1251) (Thiomicrospira denitrificans (strain ATCC 33889 / DSM 1251)).